Reading from the N-terminus, the 955-residue chain is UvrABC system protein A (955 aa).

Residue Gly-35–Ser-42 participates in ATP binding. 2 consecutive ABC transporter domains span residues Trp-322 to Ile-601 and Gly-621 to Lys-951. Gly-654–Ser-661 contributes to the ATP binding site. The segment at Cys-754–Cys-780 adopts a C4-type zinc-finger fold.

Belongs to the ABC transporter superfamily. UvrA family. Forms a heterotetramer with UvrB during the search for lesions.

It is found in the cytoplasm. Functionally, the UvrABC repair system catalyzes the recognition and processing of DNA lesions. UvrA is an ATPase and a DNA-binding protein. A damage recognition complex composed of 2 UvrA and 2 UvrB subunits scans DNA for abnormalities. When the presence of a lesion has been verified by UvrB, the UvrA molecules dissociate. The chain is UvrABC system protein A from Rickettsia felis (strain ATCC VR-1525 / URRWXCal2) (Rickettsia azadi).